A 352-amino-acid polypeptide reads, in one-letter code: Long-chain-alcohol O-fatty-acyltransferase (352 aa).

A run of 8 helical transmembrane segments spans residues 13–33 (VWIS…VAPH), 34–54 (GGAL…FLPL), 67–87 (LYLV…LGPL), 128–148 (KVVL…IYEF), 155–175 (FVIS…TLAA), 239–259 (VAGA…VFFF), 267–287 (SWEV…EMVV), and 303–323 (GALT…PQLV).

The protein belongs to the wax synthase family.

The protein resides in the microsome membrane. The enzyme catalyses a long chain fatty alcohol + a fatty acyl-CoA = a wax ester + CoA. Functionally, catalyzes the final step in the synthesis of long-chain linear esters (waxes). Has activity with both saturated and monounsaturated acyl-CoA ranging from 14 to 24 carbons in length, but C20:1 acyl-CoA is the preferred substrate. The sequence is that of Long-chain-alcohol O-fatty-acyltransferase from Simmondsia chinensis (Jojoba).